We begin with the raw amino-acid sequence, 93 residues long: Ferredoxin-2 (93 aa).

The region spanning 2–91 is the 2Fe-2S ferredoxin-type domain; it reads YKVTLKTPDG…DVVIETHKED (90 aa). [2Fe-2S] cluster is bound by residues Cys-37, Cys-42, Cys-45, and Cys-75.

This sequence belongs to the 2Fe2S plant-type ferredoxin family. [2Fe-2S] cluster is required as a cofactor.

It is found in the plastid. Its subcellular location is the chloroplast. Its function is as follows. Ferredoxins are iron-sulfur proteins that transfer electrons in a wide variety of metabolic reactions. The polypeptide is Ferredoxin-2 (Equisetum telmateia (Great horsetail)).